Consider the following 665-residue polypeptide: BTB/POZ domain-containing protein At1g30440 (665 aa).

A BTB domain is found at 28–98 (SDIVVEVGEM…CYGVKLELTA (71 aa)). An NPH3 domain is found at 214-508 (DWWYEDASML…VQVLFFEQLQ (295 aa)). A disordered region spans residues 260-280 (LKRRRGGPESSGRFSTPLGSG). The segment covering 271 to 280 (GRFSTPLGSG) has biased composition (polar residues). S279 is subject to Phosphoserine. The stretch at 281–306 (NVLSEEEQKNLLEEIQELLRMQKGLV) forms a coiled coil. Phosphotyrosine is present on Y449. Positions 626 to 639 (SAQEGSVSKSNNEN) are enriched in polar residues. Positions 626–665 (SAQEGSVSKSNNENVKIEKLKDVKERRGKHKKASSISSER) are disordered. The segment covering 640–650 (VKIEKLKDVKE) has biased composition (basic and acidic residues).

Belongs to the NPH3 family.

The protein operates within protein modification; protein ubiquitination. Functionally, may act as a substrate-specific adapter of an E3 ubiquitin-protein ligase complex (CUL3-RBX1-BTB) which mediates the ubiquitination and subsequent proteasomal degradation of target proteins. This chain is BTB/POZ domain-containing protein At1g30440, found in Arabidopsis thaliana (Mouse-ear cress).